Reading from the N-terminus, the 126-residue chain is Adenosine 5'-monophosphoramidase HINT1 (126 aa).

A2 is subject to N-acetylalanine. An HIT domain is found at I18–G126. Residues K21 and K30 each carry the N6-acetyllysine modification. Position 43 to 44 (D43 to I44) interacts with AMP. 2 positions are modified to phosphoserine: S45 and S72. AMP contacts are provided by residues N99, G105–S107, and H112–H114. The Histidine triad motif signature appears at H110 to H114. H112 serves as the catalytic Tele-AMP-histidine intermediate.

This sequence belongs to the HINT family. Homodimer. Interacts with CDK7. Interacts with RUVBL1 and RUVBL2 and is associated with the LEF1/TCF1-CTNNB1 complex and with a KAT5 histone acetyltransferase complex. Identified in a complex with MITF and CTNNB1. Interacts with CDC34 and RBX1, and is part of a SCF (SKP2-CUL1-F-box protein) E3 ubiquitin-protein ligase complex. Interacts with SUMO1, SUMO2 and RGS17. Interacts with the Ten-1 ICD form of TENM1. Interacts with CALM1; interaction increases in the presence of calcium ions. As to expression, widely expressed.

The protein resides in the cytoplasm. The protein localises to the nucleus. The catalysed reaction is adenosine 5'-phosphoramidate + H2O = AMP + NH4(+). Its function is as follows. Exhibits adenosine 5'-monophosphoramidase activity, hydrolyzing purine nucleotide phosphoramidates with a single phosphate group such as adenosine 5'monophosphoramidate (AMP-NH2) to yield AMP and NH2. Hydrolyzes adenosine 5'monophosphomorpholidate (AMP-morpholidate) and guanosine 5'monophosphomorpholidate (GMP-morpholidate). Hydrolyzes lysyl-AMP (AMP-N-epsilon-(N-alpha-acetyl lysine methyl ester)) generated by lysine tRNA ligase, as well as Met-AMP, His-AMP and Asp-AMP, lysyl-GMP (GMP-N-epsilon-(N-alpha-acetyl lysine methyl ester)) and AMP-N-alanine methyl ester. Can also convert adenosine 5'-O-phosphorothioate and guanosine 5'-O-phosphorothioate to the corresponding nucleoside 5'-O-phosphates with concomitant release of hydrogen sulfide. In addition, functions as a scaffolding protein that modulates transcriptional activation by the LEF1/TCF1-CTNNB1 complex and by the complex formed with MITF and CTNNB1. Modulates p53/TP53 levels and p53/TP53-mediated apoptosis. Modulates proteasomal degradation of target proteins by the SCF (SKP2-CUL1-F-box protein) E3 ubiquitin-protein ligase complex. Also exhibits SUMO-specific isopeptidase activity, deconjugating SUMO1 from RANGAP1 and RGS17. The polypeptide is Adenosine 5'-monophosphoramidase HINT1 (HINT1) (Bos taurus (Bovine)).